Here is a 485-residue protein sequence, read N- to C-terminus: Iroquois-class homeodomain protein IRX-4 (485 aa).

A DNA-binding region (homeobox; TALE-type) is located at residues 142-203 (GTRRKNATRE…NARRRLKKEN (62 aa)). The tract at residues 206 to 313 (TWPPRNKCSD…EEEEAAERAR (108 aa)) is disordered. Residues 221–232 (EEEEEEEEECSQ) are compositionally biased toward acidic residues. Residues 234–253 (DAMKSEKAEEPTGKEEKELE) show a composition bias toward basic and acidic residues. Acidic residues predominate over residues 254–269 (LSDLEDLDAAESESSE). The span at 282–294 (HPLPGGGPPPRAA) shows a compositional bias: pro residues.

It belongs to the TALE/IRO homeobox family. As to expression, ventricles of the heart, developing feather buds, retina, hindbrain.

It localises to the nucleus. In terms of biological role, regulates the chamber-specific expression of myosin isoforms by activating the expression of the ventricle myosin heavy chain-1 (Vmhc1) and suppressing the expression of the atrial myosin heavy chain-1 (Amhc1) in the ventricles. May play a critical role in establishing chamber-specific gene expression in the developing heart. The chain is Iroquois-class homeodomain protein IRX-4 (IRX4) from Gallus gallus (Chicken).